Reading from the N-terminus, the 544-residue chain is ATP synthase subunit alpha (544 aa).

173 to 180 (GDRQTGKT) serves as a coordination point for ATP. The disordered stretch occupies residues 513-544 (GSDGQIIGGGEPESDGEDVDVEQEQIVRQKRG). A compositionally biased stretch (acidic residues) spans 524 to 535 (PESDGEDVDVEQ).

Belongs to the ATPase alpha/beta chains family. In terms of assembly, F-type ATPases have 2 components, CF(1) - the catalytic core - and CF(0) - the membrane proton channel. CF(1) has five subunits: alpha(3), beta(3), gamma(1), delta(1), epsilon(1). CF(0) has three main subunits: a(1), b(2) and c(9-12). The alpha and beta chains form an alternating ring which encloses part of the gamma chain. CF(1) is attached to CF(0) by a central stalk formed by the gamma and epsilon chains, while a peripheral stalk is formed by the delta and b chains.

Its subcellular location is the cell membrane. It carries out the reaction ATP + H2O + 4 H(+)(in) = ADP + phosphate + 5 H(+)(out). Its function is as follows. Produces ATP from ADP in the presence of a proton gradient across the membrane. The alpha chain is a regulatory subunit. In Beutenbergia cavernae (strain ATCC BAA-8 / DSM 12333 / CCUG 43141 / JCM 11478 / NBRC 16432 / NCIMB 13614 / HKI 0122), this protein is ATP synthase subunit alpha.